The primary structure comprises 305 residues: Probable DNA-invertase y4cG (305 aa).

One can recognise a Resolvase/invertase-type recombinase catalytic domain in the interval 15–148 (RLIGYARVST…SGMQAAKARG (134 aa)). The active-site O-(5'-phospho-DNA)-serine intermediate is S23.

It belongs to the site-specific recombinase resolvase family.

This chain is Probable DNA-invertase y4cG, found in Sinorhizobium fredii (strain NBRC 101917 / NGR234).